The sequence spans 284 residues: NAD kinase (284 aa).

The active-site Proton acceptor is the Asp70. NAD(+) contacts are provided by residues Asp70 to Gly71, Asn139 to Glu140, Lys167, Asp169, Leu177, Thr180 to Ser185, and Gln236.

This sequence belongs to the NAD kinase family. The cofactor is a divalent metal cation.

Its subcellular location is the cytoplasm. The catalysed reaction is NAD(+) + ATP = ADP + NADP(+) + H(+). Involved in the regulation of the intracellular balance of NAD and NADP, and is a key enzyme in the biosynthesis of NADP. Catalyzes specifically the phosphorylation on 2'-hydroxyl of the adenosine moiety of NAD to yield NADP. The sequence is that of NAD kinase from Helicobacter pylori (strain J99 / ATCC 700824) (Campylobacter pylori J99).